The sequence spans 78 residues: Small ribosomal subunit protein bS18 (78 aa).

This sequence belongs to the bacterial ribosomal protein bS18 family. As to quaternary structure, part of the 30S ribosomal subunit. Forms a tight heterodimer with protein bS6.

In terms of biological role, binds as a heterodimer with protein bS6 to the central domain of the 16S rRNA, where it helps stabilize the platform of the 30S subunit. The chain is Small ribosomal subunit protein bS18 from Clostridium novyi (strain NT).